Here is a 193-residue protein sequence, read N- to C-terminus: Phosphoheptose isomerase (193 aa).

In terms of domain architecture, SIS spans 37–193 (LADSFKAGGK…QLIEKEMVKA (157 aa)). 52–54 (NGG) contacts substrate. Positions 61 and 65 each coordinate Zn(2+). Substrate is bound by residues E65, 93-94 (ND), 119-121 (STS), S124, and Q172. Positions 172 and 180 each coordinate Zn(2+).

The protein belongs to the SIS family. GmhA subfamily. In terms of assembly, homotetramer. Zn(2+) serves as cofactor.

Its subcellular location is the cytoplasm. It catalyses the reaction 2 D-sedoheptulose 7-phosphate = D-glycero-alpha-D-manno-heptose 7-phosphate + D-glycero-beta-D-manno-heptose 7-phosphate. It functions in the pathway carbohydrate biosynthesis; D-glycero-D-manno-heptose 7-phosphate biosynthesis; D-glycero-alpha-D-manno-heptose 7-phosphate and D-glycero-beta-D-manno-heptose 7-phosphate from sedoheptulose 7-phosphate: step 1/1. The protein operates within bacterial outer membrane biogenesis; LPS core biosynthesis. Functionally, catalyzes the isomerization of sedoheptulose 7-phosphate in D-glycero-D-manno-heptose 7-phosphate. The sequence is that of Phosphoheptose isomerase from Yersinia pestis.